The sequence spans 355 residues: Epoxide hydrolase 2 (355 aa).

Residues Val-78–Gln-323 form the AB hydrolase-1 domain. Asp-152 serves as the catalytic Nucleophile. Tyr-263 acts as the Proton donor in catalysis. The active-site Proton acceptor is the His-319.

It belongs to the AB hydrolase superfamily. Epoxide hydrolase family.

It carries out the reaction an epoxide + H2O = an ethanediol. It participates in lipid metabolism. Its function is as follows. Catalyzes the hydrolysis of epoxide-containing fatty acids. Active in vitro against trans-1,3-diphenylpropene oxide (t-DPPO), epoxyeicosatrienoic acids (EETs) including 8,9-EET, 11,12-EET and 14,15-EET and the linoleic acid metabolites 12,13-epoxy-9-octadecenoate (12,13-EpOME) and 9,10-epoxy-12-octadecenoate (9,10-EpOME). The sequence is that of Epoxide hydrolase 2 from Caenorhabditis elegans.